The following is a 479-amino-acid chain: HSPB1-associated protein 1 (479 aa).

The segment at 1 to 25 (MEAGCEGSSPQTLGERTMGEEGERV) is disordered. An interaction with HSPB1 region spans residues 88–208 (ETECSYVDAT…EDTPFLYPTR (121 aa)). A JmjC domain is found at 124–288 (WAYADYKYFV…HLARVEEAVT (165 aa)). The disordered stretch occupies residues 347–412 (PRANGEEPGV…GDSQECTSRN (66 aa)). The span at 356–369 (VQEHMEVEQARDPS) shows a compositional bias: basic and acidic residues.

As to quaternary structure, interacts with CRYAB and HSPB1. Widely expressed. Highly expressed by Sertoli cells in testis (at protein level).

It localises to the cytoplasm. May play a role in cellular stress response. The protein is HSPB1-associated protein 1 (Hspbap1) of Rattus norvegicus (Rat).